Reading from the N-terminus, the 201-residue chain is Recombination protein RecR (201 aa).

The C4-type zinc finger occupies 60–75 (CSVCGNIDTTDPCSIC). Residues 83 to 178 (GTIIVVEDIS…KITRLAHGVP (96 aa)) form the Toprim domain.

The protein belongs to the RecR family.

In terms of biological role, may play a role in DNA repair. It seems to be involved in an RecBC-independent recombinational process of DNA repair. It may act with RecF and RecO. This Bartonella bacilliformis (strain ATCC 35685 / KC583 / Herrer 020/F12,63) protein is Recombination protein RecR.